Reading from the N-terminus, the 295-residue chain is Bifunctional protein FolD (295 aa).

Residues 165–167 (GRG), S192, and I233 contribute to the NADP(+) site.

This sequence belongs to the tetrahydrofolate dehydrogenase/cyclohydrolase family. Homodimer.

It catalyses the reaction (6R)-5,10-methylene-5,6,7,8-tetrahydrofolate + NADP(+) = (6R)-5,10-methenyltetrahydrofolate + NADPH. The catalysed reaction is (6R)-5,10-methenyltetrahydrofolate + H2O = (6R)-10-formyltetrahydrofolate + H(+). It participates in one-carbon metabolism; tetrahydrofolate interconversion. Catalyzes the oxidation of 5,10-methylenetetrahydrofolate to 5,10-methenyltetrahydrofolate and then the hydrolysis of 5,10-methenyltetrahydrofolate to 10-formyltetrahydrofolate. This Tropheryma whipplei (strain TW08/27) (Whipple's bacillus) protein is Bifunctional protein FolD.